Here is a 574-residue protein sequence, read N- to C-terminus: uncharacterized protein (574 aa).

A disordered region spans residues 297–317 (SAASKPRKRKKDEVSGAQVNS).

This is an uncharacterized protein from Mus musculus (Mouse).